Consider the following 368-residue polypeptide: 1-aminocyclopropane-1-carboxylate synthase (368 aa).

Lys230 bears the N6-(pyridoxal phosphate)lysine mark.

The protein belongs to the class-I pyridoxal-phosphate-dependent aminotransferase family. As to quaternary structure, homodimer. Requires pyridoxal 5'-phosphate as cofactor.

The enzyme catalyses S-adenosyl-L-methionine = 1-aminocyclopropane-1-carboxylate + S-methyl-5'-thioadenosine + H(+). It functions in the pathway alkene biosynthesis; ethylene biosynthesis via S-adenosyl-L-methionine; ethylene from S-adenosyl-L-methionine: step 1/2. Catalyzes the formation of 1-aminocyclopropane-1-carboxylate, a direct precursor of ethylene in higher plants. The sequence is that of 1-aminocyclopropane-1-carboxylate synthase (ACS5) from Vigna radiata var. radiata (Mung bean).